The following is a 176-amino-acid chain: NAD(P)H-quinone oxidoreductase subunit 6, chloroplastic (176 aa).

Helical transmembrane passes span 10 to 30, 32 to 52, 60 to 80, 107 to 127, and 152 to 172; these read FLLV…VLLT, PIFS…FHIP, AAQL…AVMF, IFVS…IWTT, and FFLP…GAIA.

It belongs to the complex I subunit 6 family. NDH is composed of at least 16 different subunits, 5 of which are encoded in the nucleus.

It is found in the plastid. It localises to the chloroplast thylakoid membrane. The catalysed reaction is a plastoquinone + NADH + (n+1) H(+)(in) = a plastoquinol + NAD(+) + n H(+)(out). It catalyses the reaction a plastoquinone + NADPH + (n+1) H(+)(in) = a plastoquinol + NADP(+) + n H(+)(out). NDH shuttles electrons from NAD(P)H:plastoquinone, via FMN and iron-sulfur (Fe-S) centers, to quinones in the photosynthetic chain and possibly in a chloroplast respiratory chain. The immediate electron acceptor for the enzyme in this species is believed to be plastoquinone. Couples the redox reaction to proton translocation, and thus conserves the redox energy in a proton gradient. The chain is NAD(P)H-quinone oxidoreductase subunit 6, chloroplastic (ndhG) from Buxus microphylla (Littleleaf boxwood).